The chain runs to 272 residues: NADH-dependent L-xylulose reductase (272 aa).

NADP(+)-binding residues include L24 and D78. The active-site Proton donor is the S160. NADP(+) contacts are provided by Y175, K179, and I208. Y175 (proton acceptor) is an active-site residue. Residue K179 is the Lowers pKa of active site Tyr of the active site.

This sequence belongs to the short-chain dehydrogenases/reductases (SDR) family.

The enzyme catalyses xylitol + NAD(+) = L-xylulose + NADH + H(+). It catalyses the reaction D-arabinitol + NAD(+) = D-ribulose + NADH + H(+). Its function is as follows. NADH-dependent L-xylulose reductase; part of the yeast pathway for L-arabinose catabolism. Reversibly converts L-xylulose to xylitol and D-ribulose to D-arabinitol. It has a much lower activity with D-xylulose. Sugar alcohols can serve as a substrate when the hydroxyl group of C-2 is in the L- and the hydroxyl group of the C-3 is in the D-configuration. Also seems to be specific for sugar alcohols that have not more than 5 carbons since no activity is observed with dulcitol (galactitol), which has the hydroxyl group of C-2 in L- and of C-3 in D-configuration, but is a six-carbon sugar alcohol. The protein is NADH-dependent L-xylulose reductase of Ambrosiozyma monospora (Yeast).